A 94-amino-acid chain; its full sequence is Large ribosomal subunit protein uL24c (94 aa).

This sequence belongs to the universal ribosomal protein uL24 family. In terms of assembly, part of the 50S ribosomal subunit.

It is found in the plastid. Its subcellular location is the chloroplast. In terms of biological role, one of two assembly initiator proteins, it binds directly to the 5'-end of the 23S rRNA, where it nucleates assembly of the 50S subunit. The protein is Large ribosomal subunit protein uL24c (rpl24) of Cyanidium caldarium (Red alga).